The primary structure comprises 1322 residues: Phosphoribosylformylglycinamidine synthase (1322 aa).

ATP contacts are provided by residues glycine 300–aspartate 311 and alanine 702. The Mg(2+) site is built by aspartate 703, glutamate 742, asparagine 746, and aspartate 915. An ATP-binding site is contributed by serine 917. Positions valine 1073–glycine 1322 constitute a Glutamine amidotransferase type-1 domain. Cysteine 1166 acts as the Nucleophile in catalysis. Residues histidine 1287 and glutamate 1289 contribute to the active site.

The protein in the N-terminal section; belongs to the FGAMS family. In terms of assembly, monomer.

It localises to the cytoplasm. The catalysed reaction is N(2)-formyl-N(1)-(5-phospho-beta-D-ribosyl)glycinamide + L-glutamine + ATP + H2O = 2-formamido-N(1)-(5-O-phospho-beta-D-ribosyl)acetamidine + L-glutamate + ADP + phosphate + H(+). Its pathway is purine metabolism; IMP biosynthesis via de novo pathway; 5-amino-1-(5-phospho-D-ribosyl)imidazole from N(2)-formyl-N(1)-(5-phospho-D-ribosyl)glycinamide: step 1/2. Phosphoribosylformylglycinamidine synthase involved in the purines biosynthetic pathway. Catalyzes the ATP-dependent conversion of formylglycinamide ribonucleotide (FGAR) and glutamine to yield formylglycinamidine ribonucleotide (FGAM) and glutamate. The polypeptide is Phosphoribosylformylglycinamidine synthase (Xylella fastidiosa (strain Temecula1 / ATCC 700964)).